The primary structure comprises 87 residues: Small ribosomal subunit protein bS20 (87 aa).

It belongs to the bacterial ribosomal protein bS20 family.

Binds directly to 16S ribosomal RNA. The chain is Small ribosomal subunit protein bS20 from Corynebacterium diphtheriae (strain ATCC 700971 / NCTC 13129 / Biotype gravis).